A 326-amino-acid chain; its full sequence is tRNA-modifying protein YgfZ (326 aa).

Residues Trp-27 and Trp-189 each contribute to the folate site.

This sequence belongs to the tRNA-modifying YgfZ family.

The protein localises to the cytoplasm. Folate-binding protein involved in regulating the level of ATP-DnaA and in the modification of some tRNAs. It is probably a key factor in regulatory networks that act via tRNA modification, such as initiation of chromosomal replication. The sequence is that of tRNA-modifying protein YgfZ from Escherichia coli O6:H1 (strain CFT073 / ATCC 700928 / UPEC).